The chain runs to 289 residues: uncharacterized protein (289 aa).

This is an uncharacterized protein from Escherichia coli (strain K12).